The sequence spans 199 residues: Shikimate kinase (199 aa).

32–37 serves as a coordination point for ATP; the sequence is GSGKTS. Threonine 36 lines the Mg(2+) pocket. Substrate is bound by residues aspartate 54, arginine 78, and glycine 100. An ATP-binding site is contributed by arginine 138. Arginine 157 is a binding site for substrate.

The protein belongs to the shikimate kinase family. Monomer. The cofactor is Mg(2+).

It localises to the cytoplasm. It catalyses the reaction shikimate + ATP = 3-phosphoshikimate + ADP + H(+). It functions in the pathway metabolic intermediate biosynthesis; chorismate biosynthesis; chorismate from D-erythrose 4-phosphate and phosphoenolpyruvate: step 5/7. Its function is as follows. Catalyzes the specific phosphorylation of the 3-hydroxyl group of shikimic acid using ATP as a cosubstrate. This chain is Shikimate kinase, found in Synechococcus sp. (strain CC9605).